Consider the following 3011-residue polypeptide: MSTNPKPQRKTKRNTNRRPQNVKFPGGGQIVGGVCLLPRRGPRVGVRATRKTSERSQPRGRRQPIPKARRPEGRSWAQPGYPWPLYGNEGCGWAGWLLSPRGSRPSRGPSDPRRRSRNLGKVIDTLTCGFADLMGYIPLVGAPLGGAARALAHGVRVLEDGVNYATGNLPGCSFSIFLLALLSCLTVPASAVEVRNSSGIYHVTNDCPNASVVYETDSLIIHLPGCVPCVREGNASRCWVSLSPTVAAKDPGVPVNEIRRHVDLIVGAAAFCSAMYVGDLCGSIFLVGQLFTLSPRRHWTTQDCNCSIYPGHVTGHRMAWDMMMNWSPTGALVVAQLLRIPQAVLDMIAGAHWGVLAGPAYYSMVGNWAKVLVVLLLFAGVDATTQVTGGTAGRNAYRLASLFSTGPSQNIQLINSNGSWHINRTALNCNDSLHTGWVAALFYSHKFNSSGRPERMASCRPLTAFDQGWGPITYGGKASNDQRPYCWHYAPRPCGIVPAKEVCGPVYCFTPSPVVVGTTDKYGVPTYTWGENETDVLLLNNSRPPIGNWFGCTWMNSTGFTKTCGAPACNVGGSETNTLSCPTDCFRRHPDATYAKCGSGPWLNPRCMVDYPYRLWHYPCTVNYTIFKIRMFVGGIEHRLTAACNWTRGERCDLDDRDRAELSPLLLSTTQWQVLPCSFTTLPALSTGLIHLHQNIVDVQYLYGLSSVVTSWAIRWEYVVLLFLLLADARICACLWMMLLISQVEAALENLIVLNAASLAGTHGIVPFFIFFCAAWYLKGKWAPGLVYSVYGMWPLLLLLLALPQRAYALDQELAASCGAVVFISLAVLTLSPYYKQYMARGIWWLQYMLTRAEALLHVWVPSLNARGGRDGAILLMCVLHPHLLFDITKIMLAILGPLWILQASLLRVPYFVRAHGLIRLCMLVRKTAGGHYVQMALLKLGALTGTYIYNHLSPLQDWAHGSLRDLAVATEPVIFSRMEIKTITWGADTAACGDIINGLPVSARRGREVLLGPADALTDKGWRLLAPITAYAQQTRGLLGCIVTSLTGRDKNQVEGEIQIVSTATQTFLATCINGACWTVYHGAGSRTIASASGPVVRMYTNVDQDLVGWPAPQGARSLTPCTCGASDLYLVTRHADVIPVRRRGDNRGSLLSPRPISYLKGSSGGPLLCPMGHVAGIFRAAVCTRGVAKAVDFVPVESLETTMRSPVFTDNSSPPTVPQSYQVAHLHAPTGSGKSTKVPAAYAAQGYKVLVLNPSVAATLGFGAYMSKAHGIDPNVRTGVRTITTGSPITYSTYGKFLADGGCPGGAYDIIICDECHSVDATSILGIGTVLDQAETAGVRLTVLATATPPGLVTVPHSNIEEVALSADGEKPFYGKAIPLNYIKGGRHLIFCHSKKKCDELAAKLVGLGVNAVAFYRGLDVSVIPTTGDVVVVATDALMTGFTGDFDSVIDCNTCVVQTVDFSLDPIFSIETSTVPQDAVSRSQRRGRTGRGKHGIYRYVSPGERPSGMFDSVVLCECYDAGCAWYELTPAETTVRLRAYLNTPGLPVCQDHLEFWESVFTGLTHIDAHFLSQTKQSGENFPYLVAYQATVCARARAPPPSWDQMWKCLIRLKPTLTGATPLLYRLGSVQNEITLTHPITQYIMACMSADLEVVTSTWVLVGGVLAALAAYCLSTGSVVIVGRIILGGKPAVIPDREVLYREFDEMEECAAHVPYLEQGMHLAGQFKQKALGLLQTASKQAETITPTVRTNWQKLESFWAKHMWNFVSGIQYLAGLSTLPGNPAIASLMSFTAAVTSPLTTQQTLFFNILGGWVAAQLASPAAATAFVGAGITGAVVGSVGLGKVLVDIIAGYGAGVAGALVAFKIMSGETPTTEDLVNLLPAILSPGALVVGVVCAAILRRHVGPGEGAVQWMNRLIAFASRGNHVSPTHYVPESDASARVTQILTSLTVTQLLKRLHVWISSDCIAPCASSWLKDVWDWICEVLSDFKNWLKAKLVPQLPGIPFVSCQRGYRGVWRGEGIVHTRCPCGANITGHVKNGSMRIVGPKTCSNTWRGSFPINAYTTGPCTPSPAPNYTFALWRVSAEEYVEVRRLGDFHYVTGVTTDKLKCPCQVPSPEFFTEVDGVRLHRYAPPCKPLLREEVTFSIGLNEYLVGSQLPCEPEPDVAVLTSMLTDPSHITAETAARRLKRGSPPSLASSSASQLSAPSLKATCTTHHDSPDADLIEANLLWRQEMGGNITRVESENKIVVLDSFDPLVAEEDDREISIPAEILRKFKQFPPAMPIWARPDYNPPLVEPWKRPDYEPPLVHGCPLPPPKPTPVPPPRRKRTVVLDESTVSSALAELATKTFGSSTTSGVTSGEATESSPAPSCGGELDSEAESYSSMPPLEGEPGDPDLSDGSWSTVSSDGGTEDVVCCSMSYSWTGALITPCASEEAKLPINALSNSLLRHHNLVYSTTSRSAGQRQKKVTFDRVQVLDDHYRDVLKEAKAKASTVKARLLSVEEACSLTPPHSARSKFGYGAKDVRSHSSKAIRHINSVWQDLLEDNTTPIDTTIMAKNEVFCVKPEKGGRKPARLIVYPDLGVRVCEKRALYDVVKQLPIAVMGASYGFQYSPAQRVDFLLKAWKSKKVPMGFSYDTRCFDSTVTEADIRTEEDLYQSCDLAPEARIAIRSLTERLYIGGPLTNSKGQNCGYRRCRASGVLTTSCGNTITCFLKASAACRAAKLQDCTMLVCGDDLVVICESAGVQEDAASLRAFTEAMTRYSAPPGDPPQPEYDLELITSCSSNVSVARDGAGKRVYYLTRDPETPLARAAWETARHTPVNSWLGNIIMFAPTLWVRMVLMTHFFSILIAQEHLGKALDCEIYGAVHSVQPLDLPEIIQRLHSLSAFSLHSYSPGEINRVAACLRKLGVPPLRAWRHRARSVRATLLSQGGKAAICGKYLFNWAVKTKLKLTPLPSMSQLDLSNWFTGGYSGGDIYHSVSHARPRLFLWCLLLLSVGVGIYLLPNR.

At Ser-2 the chain carries N-acetylserine; by host. The segment at 2–23 (STNPKPQRKTKRNTNRRPQNVK) is interaction with STAT1. Positions 2 to 58 (STNPKPQRKTKRNTNRRPQNVKFPGGGQIVGGVCLLPRRGPRVGVRATRKTSERSQP) are interaction with EIF2AK2/PKR. The tract at residues 2 to 59 (STNPKPQRKTKRNTNRRPQNVKFPGGGQIVGGVCLLPRRGPRVGVRATRKTSERSQPR) is interaction with DDX3X. Positions 2–75 (STNPKPQRKT…PKARRPEGRS (74 aa)) are disordered. Over 2–168 (STNPKPQRKT…EDGVNYATGN (167 aa)) the chain is Cytoplasmic. 2 consecutive short sequence motifs (nuclear localization signal) follow at residues 5–13 (PKPQRKTKR) and 38–43 (PRRGPR). A compositionally biased stretch (basic residues) spans 7 to 16 (PQRKTKRNTN). A Phosphoserine; by host modification is found at Ser-53. 2 consecutive short sequence motifs (nuclear localization signal) follow at residues 58-64 (PRGRRQP) and 66-71 (PKARRP). The span at 58–68 (PRGRRQPIPKA) shows a compositional bias: basic residues. A Phosphoserine; by host modification is found at Ser-99. Residues 112–152 (PRRRSRNLGKVIDTLTCGFADLMGYIPLVGAPLGGAARALA) are important for endoplasmic reticulum and mitochondrial localization. Phosphoserine; by host PKA is present on Ser-116. Residues 122 to 173 (VIDTLTCGFADLMGYIPLVGAPLGGAARALAHGVRVLEDGVNYATGNLPGCS) form an interaction with APOA2 region. The interval 164 to 167 (YATG) is important for lipid droplets localization. The chain crosses the membrane as a helical span at residues 169–189 (LPGCSFSIFLLALLSCLTVPA). Positions 178–191 (LLALLSCLTVPASA) are cleaved as a propeptide — ER anchor for the core protein, removed in mature form by host signal peptidase. Over 190-358 (SAVEVRNSSG…AGAHWGVLAG (169 aa)) the chain is Lumenal. N-linked (GlcNAc...) asparagine; by host glycosylation is found at Asn-196, Asn-209, and Asn-234. Residues 265–296 (IVGAAAFCSAMYVGDLCGSIFLVGQLFTLSPR) form an important for fusion region. N-linked (GlcNAc...) asparagine; by host glycosylation is present at Asn-305. Residues 359-379 (PAYYSMVGNWAKVLVVLLLFA) traverse the membrane as a helical segment. The Lumenal portion of the chain corresponds to 380–725 (GVDATTQVTG…WEYVVLLFLL (346 aa)). Residues 385–411 (TQVTGGTAGRNAYRLASLFSTGPSQNI) are HVR1. Residues Asn-417, Asn-423, Asn-430, and Asn-448 are each glycosylated (N-linked (GlcNAc...) (high mannose) asparagine; by host). 3 cysteine pairs are disulfide-bonded: Cys-429–Cys-552, Cys-486–Cys-494, and Cys-503–Cys-508. An HVR2 region spans residues 474–479 (YGGKAS). A CD81-binding 1 region spans residues 480–493 (NDQRPYCWHYAPRP). An N-linked (GlcNAc...) (high mannose) asparagine; by host glycan is attached at Asn-532. Asn-540 carries N-linked (GlcNAc...) asparagine; by host glycosylation. Residues 544–551 (PPIGNWFG) are CD81-binding 2. Asn-556 carries an N-linked (GlcNAc...) (high mannose) asparagine; by host glycan. Intrachain disulfides connect Cys-564/Cys-569, Cys-581/Cys-585, Cys-597/Cys-620, and Cys-607/Cys-644. Asn-623 and Asn-645 each carry an N-linked (GlcNAc...) (high mannose) asparagine; by host glycan. Cys-652 and Cys-677 are oxidised to a cystine. Residues 660 to 671 (AELSPLLLSTTQ) form a PKR/eIF2-alpha phosphorylation homology domain (PePHD) region. Residues 726–746 (LADARICACLWMMLLISQVEA) form a helical membrane-spanning segment. At 747–757 (ALENLIVLNAA) the chain is on the lumenal side. Residues 758–778 (SLAGTHGIVPFFIFFCAAWYL) form a helical membrane-spanning segment. Topologically, residues 779-781 (KGK) are cytoplasmic. The helical transmembrane segment at 782 to 803 (WAPGLVYSVYGMWPLLLLLLAL) threads the bilayer. At 804 to 813 (PQRAYALDQE) the chain is on the lumenal side. Residues 814 to 834 (LAASCGAVVFISLAVLTLSPY) form a helical membrane-spanning segment. Residues 835–838 (YKQY) lie on the Cytoplasmic side of the membrane. Residues 839–859 (MARGIWWLQYMLTRAEALLHV) form a helical membrane-spanning segment. Over 860 to 881 (WVPSLNARGGRDGAILLMCVLH) the chain is Lumenal. A helical transmembrane segment spans residues 882–902 (PHLLFDITKIMLAILGPLWIL). Positions 903–1026 (QASLLRVPYF…ALTDKGWRLL (124 aa)) constitute a Peptidase C18 domain. The Cytoplasmic portion of the chain corresponds to 903-1657 (QASLLRVPYF…CMSADLEVVT (755 aa)). The interval 904-1206 (ASLLRVPYFV…PVESLETTMR (303 aa)) is protease NS2-3. A lipid anchor (S-palmitoyl cysteine; by host) is attached at Cys-922. An interaction with host SCPS1 region spans residues 929-949 (AGGHYVQMALLKLGALTGTYI). Residues His-952, Glu-972, and Cys-993 each act as for protease NS2 activity; shared with dimeric partner in the active site. Positions 1027–1208 (APITAYAQQT…ESLETTMRSP (182 aa)) constitute a Peptidase S29 domain. Active-site charge relay system; for serine protease NS3 activity residues include His-1083 and Asp-1107. Zn(2+) contacts are provided by Cys-1123 and Cys-1125. Catalysis depends on Ser-1165, which acts as the Charge relay system; for serine protease NS3 activity. Zn(2+)-binding residues include Cys-1171 and His-1175. A Helicase ATP-binding domain is found at 1217–1369 (PTVPQSYQVA…SNIEEVALSA (153 aa)). 1230–1237 (APTGSGKS) serves as a coordination point for ATP. Mg(2+)-binding residues include Ser-1237 and Glu-1317. A DECH box motif is present at residues 1316–1319 (DECH). Residues 1486–1497 (QRRGRTGRGKHG) are RNA-binding. The chain crosses the membrane as a helical span at residues 1658-1678 (STWVLVGGVLAALAAYCLSTG). Positions 1679-1690 (SVVIVGRIILGG) are NS3-binding. Topologically, residues 1679 to 1805 (SVVIVGRIIL…AVTSPLTTQQ (127 aa)) are cytoplasmic. The helical transmembrane segment at 1806 to 1824 (TLFFNILGGWVAAQLASPA) threads the bilayer. Residues 1825–1828 (AATA) are Lumenal-facing. Residues 1829–1849 (FVGAGITGAVVGSVGLGKVLV) form a helical membrane-spanning segment. Residue Asp-1850 is a topological domain, cytoplasmic. A helical membrane pass occupies residues 1851–1871 (IIAGYGAGVAGALVAFKIMSG). The Lumenal segment spans residues 1872 to 1881 (ETPTTEDLVN). The helical transmembrane segment at 1882–1902 (LLPAILSPGALVVGVVCAAIL) threads the bilayer. Topologically, residues 1903 to 1972 (RRHVGPGEGA…WISSDCIAPC (70 aa)) are cytoplasmic. S-palmitoyl cysteine; by host attachment occurs at residues Cys-1968 and Cys-1972. An intramembrane segment occupies 1973 to 2002 (ASSWLKDVWDWICEVLSDFKNWLKAKLVPQ). Topologically, residues 2003 to 2990 (LPGIPFVSCQ…YHSVSHARPR (988 aa)) are cytoplasmic. 4 residues coordinate Zn(2+): Cys-2011, Cys-2029, Cys-2031, and Cys-2052. The tract at residues 2120–2208 (EFFTEVDGVR…ASSSASQLSA (89 aa)) is FKBP8-binding. Residues 2120–2332 (EFFTEVDGVR…PVPPPRRKRT (213 aa)) are transcriptional activation. The tract at residues 2135 to 2139 (PPCKP) is interaction with non-structural protein 4A. Residues 2187–2219 (ARRLKRGSPPSLASSSASQLSAPSLKATCTTHH) form a disordered region. Residues 2189 to 2441 (RLKRGSPPSL…TPCASEEAKL (253 aa)) form an interaction with host SKP2 region. Ser-2194 is modified (phosphoserine; by host; in p56). Over residues 2194–2211 (SPPSLASSSASQLSAPSL) the composition is skewed to low complexity. Phosphoserine; by host; in p58 occurs at positions 2197, 2201, 2204, 2207, and 2210. Residues 2210–2249 (SLKATCTTHHDSPDADLIEANLLWRQEMGGNITRVESENK) form an ISDR region. The tract at residues 2210–2275 (SLKATCTTHH…REISIPAEIL (66 aa)) is interaction with EIF2AK2/PKR. The tract at residues 2249-2306 (KIVVLDSFDPLVAEEDDREISIPAEILRKFKQFPPAMPIWARPDYNPPLVEPWKRPDY) is NS4B-binding. Residues 2322-2325 (TPVP) carry the SH3-binding motif. The Nuclear localization signal motif lies at 2326 to 2334 (PPRRKRTVV). A Glycyl lysine isopeptide (Lys-Gly) (interchain with G-Cter in ubiquitin) cross-link involves residue Lys-2350. The span at 2352-2369 (FGSSTTSGVTSGEATESS) shows a compositional bias: low complexity. The interval 2352 to 2409 (FGSSTTSGVTSGEATESSPAPSCGGELDSEAESYSSMPPLEGEPGDPDLSDGSWSTVS) is disordered. Residues 2354 to 2377 (SSTTSGVTSGEATESSPAPSCGGE) form a V3 region. 2 positions are modified to phosphoserine; by host: Ser-2449 and Ser-2462. A RdRp catalytic domain is found at 2634 to 2752 (PMGFSYDTRC…ICESAGVQED (119 aa)). Asp-2640, Asp-2738, and Asp-2739 together coordinate Mg(2+). The helical transmembrane segment at 2991–3011 (LFLWCLLLLSVGVGIYLLPNR) threads the bilayer.

Belongs to the hepacivirus polyprotein family. Homooligomer. Interacts with E1 (via C-terminus). Interacts with the non-structural protein 5A. Interacts (via N-terminus) with host STAT1 (via SH2 domain); this interaction results in decreased STAT1 phosphorylation and ubiquitin-mediated proteasome-dependent STAT1 degradation, leading to decreased IFN-stimulated gene transcription. Interacts with host STAT3; this interaction constitutively activates STAT3. Interacts with host LTBR receptor. Interacts with host TNFRSF1A receptor and possibly induces apoptosis. Interacts with host HNRPK. Interacts with host YWHAE. Interacts with host UBE3A/E6AP. Interacts with host DDX3X. Interacts with host APOA2. Interacts with host RXRA protein. Interacts with host SP110 isoform 3/Sp110b; this interaction sequesters the transcriptional corepressor SP110 away from the nucleus. Interacts with host CREB3 nuclear transcription protein; this interaction triggers cell transformation. Interacts with host ACY3. Interacts with host C1QR1. Interacts with host RBM24; this interaction, which enhances the interaction of the mature core protein with 5'-UTR, may inhibit viral translation and favor replication. Interacts with host EIF2AK2/PKR; this interaction induces the autophosphorylation of EIF2AK2. Part of the viral assembly initiation complex composed of NS2, E1, E2, NS3, NS4A, NS5A and the mature core protein. As to quaternary structure, forms a heterodimer with envelope glycoprotein E2. Interacts with mature core protein. Interacts with protease NS2. The heterodimer E1/E2 interacts with host CLDN1; this interaction plays a role in viral entry into host cell. Interacts with host SPSB2 (via C-terminus). Part of the viral assembly initiation complex composed of NS2, E1, E2, NS3, NS4A, NS5A and the mature core protein. Interacts with host NEURL3; this interaction prevents E1 binding to glycoprotein E2. In terms of assembly, forms a heterodimer with envelope glycoprotein E1. Interacts with host CD81 and SCARB1 receptors; these interactions play a role in viral entry into host cell. Interacts with host EIF2AK2/PKR; this interaction inhibits EIF2AK2 and probably allows the virus to evade the innate immune response. Interacts with host CD209/DC-SIGN and CLEC4M/DC-SIGNR. Interact with host SPCS1; this interaction is essential for viral particle assembly. Interacts with protease NS2. The heterodimer E1/E2 interacts with host CLDN1; this interaction plays a role in viral entry into host cell. Part of the viral assembly initiation complex composed of NS2, E1, E2, NS3, NS4A, NS5A and the mature core protein. Interacts with host SLC3A2/4F2hc; the interaction may facilitate viral entry into host cell. Interacts with human PLSCR1. Homohexamer. Homoheptamer. Interacts with protease NS2. As to quaternary structure, homodimer. Interacts with host SPCS1; this interaction is essential for viral particle assembly. Interacts with envelope glycoprotein E1. Interacts with envelope glycoprotein E2. Interacts with viroporin p7. Interacts with serine protease/helicase NS3. Part of the replication complex composed of NS2, NS3, NS4A, NS4B, NS5A and the RNA-directed RNA polymerase embedded in an ER-derived membranous web. Part of the viral assembly initiation complex composed of NS2, E1, E2, NS3, NS4A, NS5A and the mature core protein. In terms of assembly, interacts with protease NS2. Interacts with non-structural protein 4A; this interaction stabilizes the folding of NS3 serine protease. NS3-NS4A interaction is essential for NS3 activation and allows membrane anchorage of the latter. NS3/NS4A complex also prevents phosphorylation of host IRF3, thus preventing the establishment of dsRNA induced antiviral state. Interacts with host MAVS; this interaction leads to the cleavage and inhibition of host MAVS. Interacts with host TICAM1; this interaction leads to the cleavage and inhibition of host TICAM1. Interacts with host TANK-binding kinase/TBK1; this interaction results in the inhibition of the association between TBK1 and IRF3, which leads to the inhibition of IRF3 activation. Interacts with host RBM24. Part of the replication complex composed of NS2, NS3, NS4A, NS4B, NS5A and the RNA-directed RNA polymerase embedded in an ER-derived membranous web. Part of the viral assembly initiation complex composed of NS2, E1, E2, NS3, NS4A, NS5A and the mature core protein. Interacts with NS3 serine protease; this interaction stabilizes the folding of NS3 serine protease. NS3-NS4A interaction is essential for NS3 activation and allows membrane anchorage of the latter. Interacts with non-structural protein 5A (via N-terminus). Part of the replication complex composed of NS2, NS3, NS4A, NS4B, NS5A and the RNA-directed RNA polymerase embedded in an ER-derived membranous web. Part of the viral assembly initiation complex composed of NS2, E1, E2, NS3, NS4A, NS5A and the mature core protein. As to quaternary structure, homomultimer. Interacts with non-structural protein NS5A. Interacts with host PLA2G4C; this interaction likely initiates the recruitment of replication complexes to lipid droplets. Interacts with host STING; this interaction disrupts the interaction between STING and TBK1 thereby suppressing the interferon signaling. Part of the replication complex composed of NS2, NS3, NS4A, NS4B, NS5A and the RNA-directed RNA polymerase embedded in an ER-derived membranous web. In terms of assembly, monomer. Homodimer; dimerization is required for RNA-binding. Interacts with the mature core protein. Interacts (via N-terminus) with non-structural protein 4A. Interacts with non-structural protein 4B. Interacts (via region D2) with RNA-directed RNA polymerase. Part of the viral assembly initiation complex composed of NS2, E1, E2, NS3, NS4A, NS5A and the mature core protein. Part of the replication complex composed of NS2, NS3, NS4A, NS4B, NS5A and the RNA-directed RNA polymerase embedded in an ER-derived membranous web. Interacts with host GRB2. Interacts with host BIN1. Interacts with host PIK3R1. Interacts with host SRCAP. Interacts with host FKBP8. Interacts (via C-terminus) with host VAPB (via MSP domain). Interacts with host EIF2AK2/PKR; this interaction leads to disruption of EIF2AK2 dimerization by NS5A and probably allows the virus to evade the innate immune response. Interacts (via N-terminus) with host PACSIN2 (via N-terminus); this interaction attenuates protein kinase C alpha-mediated phosphorylation of PACSIN2 by disrupting the interaction between PACSIN2 and PRKCA. Interacts (via N-terminus) with host SRC kinase (via SH2 domain). Interacts with most Src-family kinases. Interacts with host IFI27 and SKP2; promotes the ubiquitin-mediated proteasomal degradation of NS5A. Interacts with host GPS2. Interacts with host TNFRSF21; this interaction allows the modulation by the virus of JNK, p38 MAPK, STAT3, and Akt signaling pathways in a DR6-dependent manner. Interacts (via N-terminus) with host CIDEB (via N-terminus); this interaction seems to regulate the association of HCV particles with APOE. Interacts with host CHKA/Choline Kinase-alpha; CHKA bridges host PI4KA and NS5A and potentiates NS5A-stimulated PI4KA activity, which then facilitates the targeting of the ternary complex to the ER for viral replication. Interacts with host SPSB2 (via C-terminus); this interaction targets NS5A for ubiquitination and degradation. Interacts with host RAB18; this interaction may promote the association of NS5A and other replicase components with lipid droplets. Interacts (via region D2) with host PPIA/CYPA; the interaction stimulates RNA-binding ability of NS5A and is dependent on the peptidyl-prolyl cis-trans isomerase activity of PPIA/CYPA. Interacts with host TRIM14; this interaction induces the degradation of NS5A. Homooligomer. Interacts with non-structural protein 5A. Interacts with host VAPB. Interacts with host PRK2/PKN2. Interacts with host HNRNPA1 and SEPT6; these interactions facilitate viral replication. Part of the replication complex composed of NS2, NS3, NS4A, NS4B, NS5A and the RNA-directed RNA polymerase. It depends on Zn(2+) as a cofactor. Mg(2+) is required as a cofactor. In terms of processing, specific enzymatic cleavages in vivo yield mature proteins. The structural proteins, core, E1, E2 and p7 are produced by proteolytic processing by host signal peptidases. The core protein precursor is synthesized as a 23 kDa, which is retained in the ER membrane through the hydrophobic signal peptide. Cleavage by the signal peptidase releases the 21 kDa mature core protein. The cleavage of the core protein precursor occurs between aminoacids 176 and 188 but the exact cleavage site is not known. Some degraded forms of the core protein appear as well during the course of infection. The other proteins (p7, NS2, NS3, NS4A, NS4B, NS5A and NS5B) are cleaved by the viral proteases. Autoprocessing between NS2 and NS3 is mediated by the NS2 cysteine protease catalytic domain and regulated by the NS3 N-terminal domain. Post-translationally, phosphorylated by host PKC and PKA. Ubiquitinated; mediated by UBE3A and leading to core protein subsequent proteasomal degradation. In terms of processing, highly N-glycosylated. Post-translationally, palmitoylation is required for NS2/3 autoprocessing and E2 recruitment to membranes. Palmitoylated. This modification may play a role in its polymerization or in protein-protein interactions. In terms of processing, phosphorylated on serines in a basal form termed p56. p58 is a hyperphosphorylated form of p56. p56 and p58 coexist in the cell in roughly equivalent amounts. Hyperphosphorylation is dependent on the presence of NS4A. Host CSNK1A1/CKI-alpha or RPS6KB1 kinases may be responsible for NS5A phosphorylation. Post-translationally, tyrosine phosphorylation is essential for the interaction with host SRC. The N-terminus is phosphorylated by host PRK2/PKN2.

It is found in the host endoplasmic reticulum membrane. It localises to the host mitochondrion membrane. Its subcellular location is the virion. The protein localises to the host cytoplasm. The protein resides in the host nucleus. It is found in the host lipid droplet. It localises to the virion membrane. Its subcellular location is the host mitochondrion. The protein localises to the host cell membrane. The protein resides in the host perinuclear region. It catalyses the reaction Hydrolysis of four peptide bonds in the viral precursor polyprotein, commonly with Asp or Glu in the P6 position, Cys or Thr in P1 and Ser or Ala in P1'.. The catalysed reaction is a ribonucleoside 5'-triphosphate + H2O = a ribonucleoside 5'-diphosphate + phosphate + H(+). It carries out the reaction ATP + H2O = ADP + phosphate + H(+). The enzyme catalyses RNA(n) + a ribonucleoside 5'-triphosphate = RNA(n+1) + diphosphate. Inhibited by the antiviral drug hexamethylene amiloride. Inhibition by amantadine appears to be genotype-dependent. Also inhibited by long-alkyl-chain iminosugar derivatives. Its activity is regulated as follows. Activity is up-regulated by PRK2/PKN2-mediated phosphorylation. Packages viral RNA to form a viral nucleocapsid, and promotes virion budding. Participates in the viral particle production as a result of its interaction with the non-structural protein 5A. Binds RNA and may function as a RNA chaperone to induce the RNA structural rearrangements taking place during virus replication. Modulates viral translation initiation by interacting with viral IRES and 40S ribosomal subunit. Affects various cell signaling pathways, host immunity and lipid metabolism. Prevents the establishment of cellular antiviral state by blocking the interferon-alpha/beta (IFN-alpha/beta) and IFN-gamma signaling pathways and by blocking the formation of phosphorylated STAT1 and promoting ubiquitin-mediated proteasome-dependent degradation of STAT1. Activates STAT3 leading to cellular transformation. Regulates the activity of cellular genes, including c-myc and c-fos. May repress the promoter of p53, and sequester CREB3 and SP110 isoform 3/Sp110b in the cytoplasm. Represses cell cycle negative regulating factor CDKN1A, thereby interrupting an important check point of normal cell cycle regulation. Targets transcription factors involved in the regulation of inflammatory responses and in the immune response: suppresses TNF-induced NF-kappa-B activation, and activates AP-1. Binds to dendritic cells (DCs) via C1QR1, resulting in down-regulation of T-lymphocytes proliferation. Alters lipid metabolism by interacting with hepatocellular proteins involved in lipid accumulation and storage. Induces up-regulation of FAS promoter activity, and thereby contributes to the increased triglyceride accumulation in hepatocytes (steatosis). Functionally, forms a heterodimer with envelope glycoprotein E2, which mediates virus attachment to the host cell, virion internalization through clathrin-dependent endocytosis and fusion with host membrane. Fusion with the host cell is most likely mediated by both E1 and E2, through conformational rearrangements of the heterodimer required for fusion rather than a classical class II fusion mechanism. E1/E2 heterodimer binds host apolipoproteins such as APOB and ApoE thereby forming a lipo-viro-particle (LVP). APOE associated to the LVP allows the initial virus attachment to cell surface receptors such as the heparan sulfate proteoglycans (HSPGs), syndecan-1 (SDC1), syndecan-1 (SDC2), the low-density lipoprotein receptor (LDLR) and scavenger receptor class B type I (SCARB1). The cholesterol transfer activity of SCARB1 allows E2 exposure and binding of E2 to SCARB1 and the tetraspanin CD81. E1/E2 heterodimer binding on CD81 activates the epithelial growth factor receptor (EGFR) signaling pathway. Diffusion of the complex E1-E2-EGFR-SCARB1-CD81 to the cell lateral membrane allows further interaction with Claudin 1 (CLDN1) and occludin (OCLN) to finally trigger HCV entry. Its function is as follows. Forms a heterodimer with envelope glycoprotein E1, which mediates virus attachment to the host cell, virion internalization through clathrin-dependent endocytosis and fusion with host membrane. Fusion with the host cell is most likely mediated by both E1 and E2, through conformational rearrangements of the heterodimer required for fusion rather than a classical class II fusion mechanism. The interaction between envelope glycoprotein E2 and host apolipoprotein E/APOE allows the proper assembly, maturation and infectivity of the viral particles. This interaction is probably promoted via the up-regulation of cellular autophagy by the virus. E1/E2 heterodimer binds host apolipoproteins such as APOB and APOE thereby forming a lipo-viro-particle (LVP). APOE associated to the LVP allows the initial virus attachment to cell surface receptors such as the heparan sulfate proteoglycans (HSPGs), syndecan-1 (SDC1), syndecan-1 (SDC2), the low-density lipoprotein receptor (LDLR) and scavenger receptor class B type I (SCARB1). The cholesterol transfer activity of SCARB1 allows E2 exposure and binding of E2 to SCARB1 and the tetraspanin CD81. E1/E2 heterodimer binding on CD81 activates the epithelial growth factor receptor (EGFR) signaling pathway. Diffusion of the complex E1-E2-EGFR-SCARB1-CD81 to the cell lateral membrane allows further interaction with Claudin 1 (CLDN1) and occludin (OCLN) to finally trigger HCV entry. Inhibits host EIF2AK2/PKR activation, preventing the establishment of an antiviral state. Viral ligand for CD209/DC-SIGN and CLEC4M/DC-SIGNR, which are respectively found on dendritic cells (DCs), and on liver sinusoidal endothelial cells and macrophage-like cells of lymph node sinuses. These interactions allow the capture of circulating HCV particles by these cells and subsequent facilitated transmission to permissive cells such as hepatocytes and lymphocyte subpopulations. The interaction between E2 and host amino acid transporter complex formed by SLC3A2 and SLC7A5/LAT1 may facilitate viral entry into host cell. In terms of biological role, ion channel protein that acts as a viroporin and plays an essential role in the assembly, envelopment and secretion of viral particles. Regulates the host cell secretory pathway, which induces the intracellular retention of viral glycoproteins and favors assembly of viral particles. Creates a pore in acidic organelles and releases Ca(2+) and H(+) in the cytoplasm of infected cells, leading to a productive viral infection. High levels of cytoplasmic Ca(2+) may trigger membrane trafficking and transport of viral ER-associated proteins to viroplasms, sites of viral genome replication. This ionic imbalance induces the assembly of the inflammasome complex, which triggers the maturation of pro-IL-1beta into IL-1beta through the action of caspase-1. Targets also host mitochondria and induces mitochondrial depolarization. In addition of its role as a viroporin, acts as a lipid raft adhesion factor. Cysteine protease required for the proteolytic auto-cleavage between the non-structural proteins NS2 and NS3. The N-terminus of NS3 is required for the function of NS2 protease (active region NS2-3). Promotes the initiation of viral particle assembly by mediating the interaction between structural and non-structural proteins. Functionally, displays three enzymatic activities: serine protease with a chymotrypsin-like fold, NTPase and RNA helicase. NS3 serine protease, in association with NS4A, is responsible for the cleavages of NS3-NS4A, NS4A-NS4B, NS4B-NS5A and NS5A-NS5B. The NS3/NS4A complex prevents phosphorylation of host IRF3, thus preventing the establishment of dsRNA induced antiviral state. The NS3/NS4A complex induces host amino acid transporter component SLC3A2, thus contributing to HCV propagation. NS3 RNA helicase binds to RNA and unwinds both dsDNA and dsRNA in the 3' to 5' direction, and likely resolves RNA complicated stable secondary structures in the template strand. Binds a single ATP and catalyzes the unzipping of a single base pair of dsRNA. Inhibits host antiviral proteins TBK1 and IRF3 thereby preventing the establishment of an antiviral state. Cleaves host MAVS/CARDIF thereby preventing the establishment of an antiviral state. Cleaves host TICAM1/TRIF, thereby disrupting TLR3 signaling and preventing the establishment of an antiviral state. Its function is as follows. Induces a specific membrane alteration that serves as a scaffold for the virus replication complex. This membrane alteration gives rise to the so-called ER-derived membranous web that contains the replication complex. NS4B self-interaction contributes to its function in membranous web formation. Promotes host TRIF protein degradation in a CASP8-dependent manner thereby inhibiting host TLR3-mediated interferon signaling. Disrupts the interaction between STING and TBK1 contributing to the inhibition of interferon signaling. In terms of biological role, phosphorylated protein that is indispensable for viral replication and assembly. Both hypo- and hyperphosphorylated states are required for the viral life cycle. The hyperphosphorylated form of NS5A is an inhibitor of viral replication. Involved in RNA-binding and especially in binding to the viral genome. Zinc is essential for RNA-binding. Participates in the viral particle production as a result of its interaction with the mature viral core protein. Its interaction with host VAPB may target the viral replication complex to vesicles. Down-regulates viral IRES translation initiation. Mediates interferon resistance, presumably by interacting with and inhibiting host EIF2AK2/PKR. Prevents BIN1-induced apoptosis. Acts as a transcriptional activator of some host genes important for viral replication when localized in the nucleus. Via the interaction with host PACSIN2, modulates lipid droplet formation in order to promote virion assembly. Modulates TNFRSF21/DR6 signaling pathway for viral propagation. RNA-dependent RNA polymerase that performs primer-template recognition and RNA synthesis during viral replication. Initiates RNA transcription/replication at a flavin adenine dinucleotide (FAD), resulting in a 5'- FAD cap on viral RNAs. In this way, recognition of viral 5' RNA by host pattern recognition receptors can be bypassed, thereby evading activation of antiviral pathways. The sequence is that of Genome polyprotein from Hepatitis C virus genotype 1c (isolate India) (HCV).